A 179-amino-acid chain; its full sequence is Large ribosomal subunit protein uL5 (179 aa).

Belongs to the universal ribosomal protein uL5 family. As to quaternary structure, part of the 50S ribosomal subunit; part of the 5S rRNA/L5/L18/L25 subcomplex. Contacts the 5S rRNA and the P site tRNA. Forms a bridge to the 30S subunit in the 70S ribosome.

Its function is as follows. This is one of the proteins that bind and probably mediate the attachment of the 5S RNA into the large ribosomal subunit, where it forms part of the central protuberance. In the 70S ribosome it contacts protein S13 of the 30S subunit (bridge B1b), connecting the 2 subunits; this bridge is implicated in subunit movement. Contacts the P site tRNA; the 5S rRNA and some of its associated proteins might help stabilize positioning of ribosome-bound tRNAs. The chain is Large ribosomal subunit protein uL5 from Alcanivorax borkumensis (strain ATCC 700651 / DSM 11573 / NCIMB 13689 / SK2).